The following is a 501-amino-acid chain: Lysine--tRNA ligase (501 aa).

Mg(2+)-binding residues include E410 and E417.

It belongs to the class-II aminoacyl-tRNA synthetase family. As to quaternary structure, homodimer. The cofactor is Mg(2+).

Its subcellular location is the cytoplasm. The catalysed reaction is tRNA(Lys) + L-lysine + ATP = L-lysyl-tRNA(Lys) + AMP + diphosphate. The polypeptide is Lysine--tRNA ligase (Shewanella halifaxensis (strain HAW-EB4)).